Consider the following 103-residue polypeptide: Co-chaperonin GroES (103 aa).

The protein belongs to the GroES chaperonin family. Heptamer of 7 subunits arranged in a ring. Interacts with the chaperonin GroEL.

Its subcellular location is the cytoplasm. Its function is as follows. Together with the chaperonin GroEL, plays an essential role in assisting protein folding. The GroEL-GroES system forms a nano-cage that allows encapsulation of the non-native substrate proteins and provides a physical environment optimized to promote and accelerate protein folding. GroES binds to the apical surface of the GroEL ring, thereby capping the opening of the GroEL channel. The chain is Co-chaperonin GroES from Prochlorococcus marinus (strain MIT 9515).